Reading from the N-terminus, the 205-residue chain is Holliday junction branch migration complex subunit RuvA (205 aa).

The domain I stretch occupies residues 1–64 (MIGRLRGVLI…EDAQLLYGFI (64 aa)). The tract at residues 65–143 (TKKERSLFRL…SLMEASVGSE (79 aa)) is domain II. The flexible linker stretch occupies residues 144 to 156 (REFVLQSNYSPAP). The segment at 157–205 (TVNSAEEDAISALLSLGYKPPQASKAVSAAYKEGMDSETLIKAALKSML) is domain III.

It belongs to the RuvA family. In terms of assembly, homotetramer. Forms an RuvA(8)-RuvB(12)-Holliday junction (HJ) complex. HJ DNA is sandwiched between 2 RuvA tetramers; dsDNA enters through RuvA and exits via RuvB. An RuvB hexamer assembles on each DNA strand where it exits the tetramer. Each RuvB hexamer is contacted by two RuvA subunits (via domain III) on 2 adjacent RuvB subunits; this complex drives branch migration. In the full resolvosome a probable DNA-RuvA(4)-RuvB(12)-RuvC(2) complex forms which resolves the HJ.

Its subcellular location is the cytoplasm. In terms of biological role, the RuvA-RuvB-RuvC complex processes Holliday junction (HJ) DNA during genetic recombination and DNA repair, while the RuvA-RuvB complex plays an important role in the rescue of blocked DNA replication forks via replication fork reversal (RFR). RuvA specifically binds to HJ cruciform DNA, conferring on it an open structure. The RuvB hexamer acts as an ATP-dependent pump, pulling dsDNA into and through the RuvAB complex. HJ branch migration allows RuvC to scan DNA until it finds its consensus sequence, where it cleaves and resolves the cruciform DNA. The sequence is that of Holliday junction branch migration complex subunit RuvA from Shewanella sp. (strain MR-4).